A 195-amino-acid chain; its full sequence is Peptidyl-tRNA hydrolase (195 aa).

Tyr-17 is a tRNA binding site. His-22 functions as the Proton acceptor in the catalytic mechanism. Positions 68, 70, and 116 each coordinate tRNA.

Belongs to the PTH family. As to quaternary structure, monomer.

The protein localises to the cytoplasm. It catalyses the reaction an N-acyl-L-alpha-aminoacyl-tRNA + H2O = an N-acyl-L-amino acid + a tRNA + H(+). In terms of biological role, hydrolyzes ribosome-free peptidyl-tRNAs (with 1 or more amino acids incorporated), which drop off the ribosome during protein synthesis, or as a result of ribosome stalling. Functionally, catalyzes the release of premature peptidyl moieties from peptidyl-tRNA molecules trapped in stalled 50S ribosomal subunits, and thus maintains levels of free tRNAs and 50S ribosomes. This is Peptidyl-tRNA hydrolase from Shewanella baltica (strain OS155 / ATCC BAA-1091).